A 154-amino-acid chain; its full sequence is Prefoldin subunit alpha (154 aa).

This sequence belongs to the prefoldin alpha subunit family. In terms of assembly, heterohexamer of two alpha and four beta subunits.

Its subcellular location is the cytoplasm. Molecular chaperone capable of stabilizing a range of proteins. Seems to fulfill an ATP-independent, HSP70-like function in archaeal de novo protein folding. This chain is Prefoldin subunit alpha, found in Hyperthermus butylicus (strain DSM 5456 / JCM 9403 / PLM1-5).